Here is a 329-residue protein sequence, read N- to C-terminus: Quinate dehydrogenase (329 aa).

It catalyses the reaction L-quinate + NAD(+) = 3-dehydroquinate + NADH + H(+). It participates in aromatic compound metabolism; 3,4-dihydroxybenzoate biosynthesis; 3-dehydroquinate from D-quinate (NAD(+) route): step 1/1. The sequence is that of Quinate dehydrogenase (qutB) from Emericella nidulans (strain FGSC A4 / ATCC 38163 / CBS 112.46 / NRRL 194 / M139) (Aspergillus nidulans).